The sequence spans 289 residues: 18S rRNA (guanine-N(7))-methyltransferase RID2 (289 aa).

Residues 215–289 are disordered; the sequence is KNEYDESCSE…FTSRKRRTRF (75 aa). Acidic residues predominate over residues 219–237; that stretch reads DESCSEDDNSDDEESEEVG. Positions 243–254 are enriched in basic residues; that stretch reads RPRKRQRTNTKV. Residues 255–264 are compositionally biased toward basic and acidic residues; that stretch reads KGREWVLRKK. Positions 268–275 match the Nuclear localization signal motif; the sequence is RRKGKNVP.

This sequence belongs to the class I-like SAM-binding methyltransferase superfamily. BUD23/WBSCR22 family. Expressed in seedlings, roots and flowers.

Its subcellular location is the nucleus. It localises to the nucleoplasm. It is found in the cytoplasm. The protein localises to the perinuclear region. The protein resides in the nucleolus. The catalysed reaction is guanosine(1575) in yeast 18S rRNA + S-adenosyl-L-methionine = N(7)-methylguanosine(1575) in yeast 18S rRNA + S-adenosyl-L-homocysteine. Essential protein. S-adenosyl-L-methionine-dependent methyltransferase that specifically methylates the N(7) position of a guanine in 18S rRNA. Requires the methyltransferase adapter protein TRM112 for full rRNA methyltransferase activity. Important for biogenesis end export of the 40S ribosomal subunit independent on its methyltransferase activity. Involved in the pre-rRNA processing steps in the nucleolus leading to small-subunit rRNA production independently of its RNA-modifying catalytic activity. Supports cell proliferation. Required for the initiation of lateral root primordia formation and for the root apical meristem (RAM) organization as well as for leaves development. During callus formation from hypocotyl and root explants, required for the initial stage of reactivation of cell proliferation in the hypocotyl stele. Involved in leaf polarity establishment by functioning cooperatively with AS2 to repress abaxial genes ARF3, ARF4, KAN1, KAN2, YAB1 and YAB5, and the knox homeobox genes KNAT1, KNAT2, KNAT6, and STM to promote adaxial development in leaf primordia at shoot apical meristems at high temperatures. In Arabidopsis thaliana (Mouse-ear cress), this protein is 18S rRNA (guanine-N(7))-methyltransferase RID2.